The sequence spans 588 residues: Cryptochrome-1 (588 aa).

One can recognise a Photolyase/cryptochrome alpha/beta domain in the interval 3-132 (VNAVHWFRKG…EVIVRISHTL (130 aa)). K11 is covalently cross-linked (Glycyl lysine isopeptide (Lys-Gly) (interchain with G-Cter in ubiquitin)). An LIR 1 motif is present at residues 50–54 (NRWRF). S71 bears the Phosphoserine; by AMPK mark. Residues 82-87 (DVFPRL) carry the LIR 2 motif. Residue K107 forms a Glycyl lysine isopeptide (Lys-Gly) (interchain with G-Cter in ubiquitin) linkage. The LIR 3 motif lies at 151-156 (KRFQTL). K159 participates in a covalent cross-link: Glycyl lysine isopeptide (Lys-Gly) (interchain with G-Cter in ubiquitin). At S247 the chain carries Phosphoserine; by MAPK. S252 provides a ligand contact to FAD. Short sequence motifs (LIR) lie at residues 255-260 (LRFGCL) and 271-276 (DLYKKV). S280 bears the Phosphoserine; by AMPK mark. The short motif at 285-290 (SLYGQL) is the LIR 6 element. Q289 contributes to the FAD binding site. K329 participates in a covalent cross-link: Glycyl lysine isopeptide (Lys-Gly) (interchain with G-Cter in ubiquitin). Positions 335-339 (TGFPW) match the LIR 7 motif. Residue H355 participates in FAD binding. The required for inhibition of CLOCK-BMAL1-mediated transcription stretch occupies residues 371 to 470 (WISWEEGMKV…LIGVNYPKPM (100 aa)). The short motif at 379-384 (KVFEEL) is the LIR 8 element. An FAD-binding site is contributed by 387-389 (DAD). Short sequence motifs (LIR) lie at residues 395–400 (GSWMWL), 411–416 (HCYCPV), and 430–435 (RRYLPV). An interaction with TIMELESS region spans residues 471–493 (VNHAEASRLNIERMKQIYQQLSR). K485 participates in a covalent cross-link: Glycyl lysine isopeptide (Lys-Gly) (interchain with G-Cter in ubiquitin). Short sequence motifs (LIR) lie at residues 486-491 (QIYQQL) and 492-497 (SRYRGL). The tract at residues 511-588 (GGLMGYAPGE…GPKVQRQSSN (78 aa)) is disordered. A compositionally biased stretch (polar residues) spans 545-568 (DSQQTNPLKQGRSSMGTGLSSGKR). K567 participates in a covalent cross-link: Glycyl lysine isopeptide (Lys-Gly) (interchain with G-Cter in ubiquitin). Phosphoserine is present on S570.

This sequence belongs to the DNA photolyase class-1 family. As to quaternary structure, component of the circadian core oscillator, which includes the CRY proteins, CLOCK or NPAS2, BMAL1 or BMAL2, CSNK1D and/or CSNK1E, TIMELESS, and the PER proteins. Interacts directly with TIMELESS. Interacts directly with PER1, PER2 and PER3; interaction with PER2 inhibits its ubiquitination and vice versa. Interacts with FBXL21. Interacts with FBXL3. Interacts with CLOCK-BMAL1 independently of PER2 and DNA. Interacts with HDAC1, HDAC2 and SIN3B. Interacts with nuclear receptors AR, NR1D1, NR3C1/GR, RORA and RORC; the interaction with at least NR3C1/GR is ligand dependent. Interacts with PRKDC. Interacts with the G protein subunit alpha GNAS; the interaction may block GPCR-mediated regulation of cAMP concentrations. Interacts with PRMT5. Interacts with EZH2. Interacts with MYBBP1A, DOCK7, HNRNPU, RPL7A, RPL8 and RPS3. Interacts with PPP5C (via TPR repeats). Interacts with MAP1LC3B. Interacts with CLOCK. Interacts with BMAL1. Interacts weakly with HDAC3; this interaction is enhanced in the presence of FBXL3. Interacts with TRIM28, KCTD5 and DDB1. Interacts with FOXO1. Interacts with DTL and DDB1-CUL4A complex. Interacts with HNF4A. Interacts with PSMD2 in a KDM8-dependent manner. Interacts with KDM8 in a FBXL3-dependent manner. Interacts with PPARG in a ligand-dependent manner. Interacts with PPARD (via domain NR LBD) and NR1I2 (via domain NR LBD) in a ligand-dependent manner. Interacts with PPARA, NR1I3 and VDR. The cofactor is FAD. (6R)-5,10-methylene-5,6,7,8-tetrahydrofolate is required as a cofactor. In terms of processing, phosphorylation on Ser-247 by MAPK is important for the inhibition of CLOCK-BMAL1-mediated transcriptional activity. Phosphorylation by CSNK1E requires interaction with PER1 or PER2. Phosphorylation at Ser-71 and Ser-280 by AMPK decreases protein stability. Phosphorylation at Ser-570 exhibits a robust circadian rhythm with a peak at CT8, increases protein stability, prevents SCF(FBXL3)-mediated degradation and is antagonized by interaction with PRKDC. Ubiquitinated by the SCF(FBXL3) and SCF(FBXL21) complexes, regulating the balance between degradation and stabilization. The SCF(FBXL3) complex is mainly nuclear and mediates ubiquitination and subsequent degradation of CRY1. In contrast, cytoplasmic SCF(FBXL21) complex-mediated ubiquitination leads to stabilize CRY1 and counteract the activity of the SCF(FBXL3) complex. The SCF(FBXL3) and SCF(FBXL21) complexes probably mediate ubiquitination at different Lys residues. Ubiquitination at Lys-11 and Lys-107 are specifically ubiquitinated by the SCF(FBXL21) complex but not by the SCF(FBXL3) complex. Ubiquitination may be inhibited by PER2. Deubiquitinated by USP7. Post-translationally, undergoes autophagy-mediated degradation in the liver in a time-dependent manner. Autophagic degradation of CRY1 (an inhibitor of gluconeogenesis) occurs during periods of reduced feeding allowing induction of gluconeogenesis and maintenance of blood glucose levels.

It localises to the cytoplasm. Its subcellular location is the nucleus. Its function is as follows. Transcriptional repressor which forms a core component of the circadian clock. The circadian clock, an internal time-keeping system, regulates various physiological processes through the generation of approximately 24 hour circadian rhythms in gene expression, which are translated into rhythms in metabolism and behavior. It is derived from the Latin roots 'circa' (about) and 'diem' (day) and acts as an important regulator of a wide array of physiological functions including metabolism, sleep, body temperature, blood pressure, endocrine, immune, cardiovascular, and renal function. Consists of two major components: the central clock, residing in the suprachiasmatic nucleus (SCN) of the brain, and the peripheral clocks that are present in nearly every tissue and organ system. Both the central and peripheral clocks can be reset by environmental cues, also known as Zeitgebers (German for 'timegivers'). The predominant Zeitgeber for the central clock is light, which is sensed by retina and signals directly to the SCN. The central clock entrains the peripheral clocks through neuronal and hormonal signals, body temperature and feeding-related cues, aligning all clocks with the external light/dark cycle. Circadian rhythms allow an organism to achieve temporal homeostasis with its environment at the molecular level by regulating gene expression to create a peak of protein expression once every 24 hours to control when a particular physiological process is most active with respect to the solar day. Transcription and translation of core clock components (CLOCK, NPAS2, BMAL1, BMAL2, PER1, PER2, PER3, CRY1 and CRY2) plays a critical role in rhythm generation, whereas delays imposed by post-translational modifications (PTMs) are important for determining the period (tau) of the rhythms (tau refers to the period of a rhythm and is the length, in time, of one complete cycle). A diurnal rhythm is synchronized with the day/night cycle, while the ultradian and infradian rhythms have a period shorter and longer than 24 hours, respectively. Disruptions in the circadian rhythms contribute to the pathology of cardiovascular diseases, cancer, metabolic syndromes and aging. A transcription/translation feedback loop (TTFL) forms the core of the molecular circadian clock mechanism. Transcription factors, CLOCK or NPAS2 and BMAL1 or BMAL2, form the positive limb of the feedback loop, act in the form of a heterodimer and activate the transcription of core clock genes and clock-controlled genes (involved in key metabolic processes), harboring E-box elements (5'-CACGTG-3') within their promoters. The core clock genes: PER1/2/3 and CRY1/2 which are transcriptional repressors form the negative limb of the feedback loop and interact with the CLOCK|NPAS2-BMAL1|BMAL2 heterodimer inhibiting its activity and thereby negatively regulating their own expression. This heterodimer also activates nuclear receptors NR1D1/2 and RORA/B/G, which form a second feedback loop and which activate and repress BMAL1 transcription, respectively. CRY1 and CRY2 have redundant functions but also differential and selective contributions at least in defining the pace of the SCN circadian clock and its circadian transcriptional outputs. More potent transcriptional repressor in cerebellum and liver than CRY2, though more effective in lengthening the period of the SCN oscillator. On its side, CRY2 seems to play a critical role in tuning SCN circadian period by opposing the action of CRY1. With CRY2, is dispensable for circadian rhythm generation but necessary for the development of intercellular networks for rhythm synchrony. Capable of translocating circadian clock core proteins such as PER proteins to the nucleus. Interacts with CLOCK-BMAL1 independently of PER proteins and is found at CLOCK-BMAL1-bound sites, suggesting that CRY may act as a molecular gatekeeper to maintain CLOCK-BMAL1 in a poised and repressed state until the proper time for transcriptional activation. Represses the CLOCK-BMAL1 induced transcription of BHLHE40/DEC1, ATF4, MTA1, KLF10 and NAMPT. May repress circadian target genes expression in collaboration with HDAC1 and HDAC2 through histone deacetylation. Mediates the clock-control activation of ATR and modulates ATR-mediated DNA damage checkpoint. In liver, mediates circadian regulation of cAMP signaling and gluconeogenesis by binding to membrane-coupled G proteins and blocking glucagon-mediated increases in intracellular cAMP concentrations and CREB1 phosphorylation. Inhibits hepatic gluconeogenesis by decreasing nuclear FOXO1 levels that down-regulates gluconeogenic gene expression. Besides its role in the maintenance of the circadian clock, is also involved in the regulation of other processes. Represses glucocorticoid receptor NR3C1/GR-induced transcriptional activity by binding to glucocorticoid response elements (GREs). Plays a key role in glucose and lipid metabolism modulation, in part, through the transcriptional regulation of genes involved in these pathways, such as LEP or ACSL4. Represses PPARD and its target genes in the skeletal muscle and limits exercise capacity. Plays an essential role in the generation of circadian rhythms in the retina. Represses the transcriptional activity of NR1I2. This is Cryptochrome-1 (Cry1) from Rattus norvegicus (Rat).